Here is an 82-residue protein sequence, read N- to C-terminus: Short neurotoxin OKI-10 (82 aa).

Residues 1 to 20 (KTLLLTLVVVTIVCLDLGYT) form the signal peptide. Cystine bridges form between Cys-23–Cys-44, Cys-37–Cys-61, Cys-63–Cys-74, and Cys-75–Cys-80.

Belongs to the three-finger toxin family. Short-chain subfamily. Type I alpha-neurotoxin sub-subfamily. Expressed by the venom gland.

The protein localises to the secreted. Functionally, binds to muscle nicotinic acetylcholine receptor (nAChR) and inhibit acetylcholine from binding to the receptor, thereby impairing neuromuscular transmission. This chain is Short neurotoxin OKI-10, found in Laticauda laticaudata (Blue-ringed sea krait).